Reading from the N-terminus, the 245-residue chain is Orotidine 5'-phosphate decarboxylase (245 aa).

Substrate is bound by residues D22, K44, 71–80 (DLKFHDIPNT), T131, R192, Q201, G221, and R222. The active-site Proton donor is K73.

The protein belongs to the OMP decarboxylase family. Type 1 subfamily. As to quaternary structure, homodimer.

The catalysed reaction is orotidine 5'-phosphate + H(+) = UMP + CO2. It participates in pyrimidine metabolism; UMP biosynthesis via de novo pathway; UMP from orotate: step 2/2. Its function is as follows. Catalyzes the decarboxylation of orotidine 5'-monophosphate (OMP) to uridine 5'-monophosphate (UMP). The sequence is that of Orotidine 5'-phosphate decarboxylase from Shigella flexneri serotype 5b (strain 8401).